Reading from the N-terminus, the 188-residue chain is Probable manganese efflux pump MntP (188 aa).

5 helical membrane-spanning segments follow: residues 3–23, 66–86, 106–128, 143–163, and 168–188; these read ITAT…ASIG, LEWN…RMII, WLLV…GLAF, ATLI…SIIG, and ILGG…HFHG.

The protein belongs to the MntP (TC 9.B.29) family.

It localises to the cell inner membrane. Functionally, probably functions as a manganese efflux pump. In Escherichia coli O7:K1 (strain IAI39 / ExPEC), this protein is Probable manganese efflux pump MntP.